Here is a 38-residue protein sequence, read N- to C-terminus: Trypsin inhibitor 2 (38 aa).

A Pyrrolidone carboxylic acid modification is found at Gln-1.

Post-translationally, contains disulfide bonds.

Inhibits trypsin-like proteases from the guts of the insect pests P.truncatus, P.americana, Acheta sp and Gryllus sp. The polypeptide is Trypsin inhibitor 2 (Opuntia streptacantha (Prickly pear cactus)).